A 296-amino-acid chain; its full sequence is tRNA-cytidine(32) 2-sulfurtransferase (296 aa).

Positions 72 to 77 (SGGKDS) match the PP-loop motif motif. Positions 147, 150, and 238 each coordinate [4Fe-4S] cluster.

It belongs to the TtcA family. Homodimer. The cofactor is Mg(2+). It depends on [4Fe-4S] cluster as a cofactor.

The protein resides in the cytoplasm. It carries out the reaction cytidine(32) in tRNA + S-sulfanyl-L-cysteinyl-[cysteine desulfurase] + AH2 + ATP = 2-thiocytidine(32) in tRNA + L-cysteinyl-[cysteine desulfurase] + A + AMP + diphosphate + H(+). Its pathway is tRNA modification. Catalyzes the ATP-dependent 2-thiolation of cytidine in position 32 of tRNA, to form 2-thiocytidine (s(2)C32). The sulfur atoms are provided by the cysteine/cysteine desulfurase (IscS) system. In Sinorhizobium fredii (strain NBRC 101917 / NGR234), this protein is tRNA-cytidine(32) 2-sulfurtransferase.